Consider the following 437-residue polypeptide: ATP-dependent protease ATPase subunit HslU (437 aa).

ATP-binding positions include Val18, 60–65 (GCGKTE), Asp250, Glu315, and Arg387.

Belongs to the ClpX chaperone family. HslU subfamily. As to quaternary structure, a double ring-shaped homohexamer of HslV is capped on each side by a ring-shaped HslU homohexamer. The assembly of the HslU/HslV complex is dependent on binding of ATP.

The protein resides in the cytoplasm. In terms of biological role, ATPase subunit of a proteasome-like degradation complex; this subunit has chaperone activity. The binding of ATP and its subsequent hydrolysis by HslU are essential for unfolding of protein substrates subsequently hydrolyzed by HslV. HslU recognizes the N-terminal part of its protein substrates and unfolds these before they are guided to HslV for hydrolysis. This Methylorubrum populi (strain ATCC BAA-705 / NCIMB 13946 / BJ001) (Methylobacterium populi) protein is ATP-dependent protease ATPase subunit HslU.